A 249-amino-acid chain; its full sequence is Cysteine desulfuration protein SufE (249 aa).

Cys154 functions as the Cysteine persulfide intermediate in the catalytic mechanism.

It belongs to the SufE family. Monomer. Interacts with SufS; interaction enhances cysteine desulfurase activity of SufS. Proteolytically cleaved.

Its subcellular location is the plastid. The protein resides in the apicoplast. Its pathway is cofactor biosynthesis; iron-sulfur cluster biosynthesis. Participates in sulfur mobilization (SUF) pathway for iron-sulfur (Fe-S) cluster biogenesis. Enhances cysteine desulfurase activity of SufS. Probably functions as a sulfur acceptor for SufS. The chain is Cysteine desulfuration protein SufE from Plasmodium falciparum (isolate 3D7).